Here is a 342-residue protein sequence, read N- to C-terminus: Cytoplasmic tRNA 2-thiolation protein 1 (342 aa).

Belongs to the TtcA family. CTU1/NCS6/ATPBD3 subfamily.

It is found in the cytoplasm. Its pathway is tRNA modification; 5-methoxycarbonylmethyl-2-thiouridine-tRNA biosynthesis. Its function is as follows. Plays a central role in 2-thiolation of mcm(5)S(2)U at tRNA wobble positions of tRNA(Lys), tRNA(Glu) and tRNA(Gln). Directly binds tRNAs and probably acts by catalyzing adenylation of tRNAs, an intermediate required for 2-thiolation. It is unclear whether it acts as a sulfurtransferase that transfers sulfur from thiocarboxylated URM1 onto the uridine of tRNAs at wobble position. The sequence is that of Cytoplasmic tRNA 2-thiolation protein 1 from Anopheles gambiae (African malaria mosquito).